The following is an 86-amino-acid chain: UPF0297 protein SSP1144 (86 aa).

It belongs to the UPF0297 family.

This is UPF0297 protein SSP1144 from Staphylococcus saprophyticus subsp. saprophyticus (strain ATCC 15305 / DSM 20229 / NCIMB 8711 / NCTC 7292 / S-41).